A 195-amino-acid polypeptide reads, in one-letter code: Putative deoxynucleoside kinase (195 aa).

This Frog virus 3 (isolate Goorha) (FV-3) protein is Putative deoxynucleoside kinase.